Here is a 318-residue protein sequence, read N- to C-terminus: Malate dehydrogenase (318 aa).

Residues 11-17 (GAGGNVG) and Asp37 each bind NAD(+). 2 residues coordinate substrate: Arg86 and Arg92. Residues Asn99 and 122-124 (VTN) each bind NAD(+). Substrate is bound by residues Asn124 and Arg155. His179 serves as the catalytic Proton acceptor.

This sequence belongs to the LDH/MDH superfamily. MDH type 3 family.

It catalyses the reaction (S)-malate + NAD(+) = oxaloacetate + NADH + H(+). Its function is as follows. Catalyzes the reversible oxidation of malate to oxaloacetate. This Nitratiruptor sp. (strain SB155-2) protein is Malate dehydrogenase.